We begin with the raw amino-acid sequence, 699 residues long: Endogenous retrovirus group K member 113 Env polyprotein (699 aa).

The interval 1 to 47 (MNPSEMQRKAPPRRRRHRNRAPLTHKMNKMVTSEEQMKLPSTKKAEP) is disordered. The first 89 residues, 1-89 (MNPSEMQRKA…ALMIVSMVVS (89 aa)), serve as a signal peptide directing secretion. Positions 10-20 (APPRRRRHRNR) are enriched in basic residues. Residues 90–632 (LPMPAGAAAA…NLNPVTWVKT (543 aa)) are Extracellular-facing. N-linked (GlcNAc...) asparagine glycans are attached at residues N100, N128, N153, N274, N355, N372, and N461. The fusion peptide stretch occupies residues 466-486 (FIFTLIAVIMGLIAVTATAAV). N507, N554, N566, and N585 each carry an N-linked (GlcNAc...) asparagine glycan. The helical transmembrane segment at 633–653 (IGSTTIINLILILVCLFCLLL) threads the bilayer. At 654 to 699 (VCRCTQQLRRDSDHRERAMMTMAVLSKRKGGNVGKSKRDQIVTVSV) the chain is on the cytoplasmic side.

It belongs to the beta type-B retroviral envelope protein family. HERV class-II K(HML-2) env subfamily. In terms of assembly, the surface (SU) and transmembrane (TM) proteins form a heterodimer. SU and TM are attached by noncovalent interactions or by a labile interchain disulfide bond. Specific enzymatic cleavages in vivo yield the mature SU and TM proteins.

It is found in the cell membrane. Its subcellular location is the virion. Retroviral envelope proteins mediate receptor recognition and membrane fusion during early infection. Endogenous envelope proteins may have kept, lost or modified their original function during evolution. This endogenous envelope protein has lost its original fusogenic properties. Functionally, SU mediates receptor recognition. In terms of biological role, TM anchors the envelope heterodimer to the viral membrane through one transmembrane domain. The other hydrophobic domain, called fusion peptide, mediates fusion of the viral membrane with the target cell membrane. This is Endogenous retrovirus group K member 113 Env polyprotein (HERVK_113) from Homo sapiens (Human).